Consider the following 339-residue polypeptide: Large ribosomal subunit protein uL10 (339 aa).

A disordered region spans residues 305 to 339; the sequence is TQPQQEEKVEEAEEEEEEEEASEEDALAGLGALFG. A compositionally biased stretch (acidic residues) spans 312 to 330; sequence KVEEAEEEEEEEEASEEDA.

The protein belongs to the universal ribosomal protein uL10 family. As to quaternary structure, part of the 50S ribosomal subunit. Forms part of the ribosomal stalk which helps the ribosome interact with GTP-bound translation factors. Forms a heptameric L10(L12)2(L12)2(L12)2 complex, where L10 forms an elongated spine to which the L12 dimers bind in a sequential fashion.

In terms of biological role, forms part of the ribosomal stalk, playing a central role in the interaction of the ribosome with GTP-bound translation factors. The sequence is that of Large ribosomal subunit protein uL10 from Thermococcus onnurineus (strain NA1).